Reading from the N-terminus, the 714-residue chain is Zinc finger matrin-type protein 1 (714 aa).

The segment at 89-119 (NFCKPCGVVLQHESERISHFESEIHAQNVKF) adopts a Matrin-type 1 zinc-finger fold. The tract at residues 172–214 (HYVGKSHSPTQNQSLEEHDQVSPSTCSPKMDEPNTTPAPPPFL) is disordered. Residues 230-254 (YVCHICSITFTSLHMFRSHMQGTEH) form a Matrin-type 2 zinc finger. Basic and acidic residues predominate over residues 417-434 (RERVDSEHRQRPCEERFS). 2 disordered regions span residues 417–469 (RERV…NDDF) and 571–714 (MPAS…ILGF). 2 stretches are compositionally biased toward polar residues: residues 437–446 (APQTYQQEYS) and 575–588 (LSLSQQEDNPSSYN). Positions 609–619 (SHRRRRQKRKR) are enriched in basic residues. Composition is skewed to basic and acidic residues over residues 620–632 (HLEEGKERPEKEQ) and 640–662 (SYQDKDLDKDKLIKQSKREEDKA). Residues 669–678 (TKHRRKKRKH) show a composition bias toward basic residues.

It localises to the nucleus. This Mus musculus (Mouse) protein is Zinc finger matrin-type protein 1 (Zmat1).